A 469-amino-acid chain; its full sequence is Putative diacyglycerol O-acyltransferase MT0231 (469 aa).

His-139 serves as the catalytic Proton acceptor.

The protein belongs to the long-chain O-acyltransferase family.

The enzyme catalyses an acyl-CoA + a 1,2-diacyl-sn-glycerol = a triacyl-sn-glycerol + CoA. The protein operates within glycerolipid metabolism; triacylglycerol biosynthesis. This is Putative diacyglycerol O-acyltransferase MT0231 from Mycobacterium tuberculosis (strain CDC 1551 / Oshkosh).